We begin with the raw amino-acid sequence, 460 residues long: Sexual development regulator velC (460 aa).

3 disordered regions span residues 67 to 131, 152 to 216, and 422 to 460; these read VGPD…PQAP, YAPR…RPDP, and KKGNDRSKNTRSHDDSSDGEQDEGEATLQGKRRRRSARQ. Over residues 192–207 the composition is skewed to polar residues; that stretch reads PVTTNGRPPDSNSPMV. One can recognise a Velvet domain in the interval 239-422; that stretch reads LSDNRFNLQI…KEQGCIISIK (184 aa). The segment covering 423 to 437 has biased composition (basic and acidic residues); the sequence is KGNDRSKNTRSHDDS. Over residues 451-460 the composition is skewed to basic residues; sequence GKRRRRSARQ.

This sequence belongs to the velvet family. VelC subfamily. Interacts with VE1.

Its subcellular location is the nucleus. Velvet-domain-containing protein that acts as a positive regulator of sexual development. Dispensable for regulation of conidial size, hyphal hydrophobicity, fumonisin production, and oxidant resistance. In Gibberella moniliformis (strain M3125 / FGSC 7600) (Maize ear and stalk rot fungus), this protein is Sexual development regulator velC.